We begin with the raw amino-acid sequence, 1088 residues long: RNA-directed RNA polymerase (1088 aa).

A RdRp catalytic domain is found at 501 to 687 (LSYGDVTRFL…AKRYIAGGKI (187 aa)).

Belongs to the reoviridae RNA-directed RNA polymerase family. Interacts with VP3 (Potential). Interacts with VP2; this interaction activates VP1. Interacts with NSP5; this interaction is probably necessary for the formation of functional virus factories. Interacts with NSP2; this interaction is weak. Mg(2+) serves as cofactor.

The protein resides in the virion. It carries out the reaction RNA(n) + a ribonucleoside 5'-triphosphate = RNA(n+1) + diphosphate. Functionally, RNA-directed RNA polymerase that is involved in both transcription and genome replication. Together with VP3 capping enzyme, forms an enzyme complex positioned near the channels situated at each of the five-fold vertices of the core. Following infection, the outermost layer of the virus is lost, leaving a double-layered particle (DLP) made up of the core and VP6 shell. VP1 then catalyzes the transcription of fully conservative plus-strand genomic RNAs that are extruded through the DLP's channels into the cytoplasm where they function as mRNAs for translation of viral proteins. One copy of each of the viral (+)RNAs is also recruited during core assembly, together with newly synthesized polymerase complexes and VP2. The polymerase of these novo-formed particles catalyzes the synthesis of complementary minus-strands leading to dsRNA formation. To do so, the polymerase specifically recognizes and binds 4 bases 5'-UGUG-3' in the conserved 3'-sequence of plus-strand RNA templates. VP2 presumably activates the autoinhibited VP1-RNA complex to coordinate packaging and genome replication. Once dsRNA synthesis is complete, the polymerase switches to the transcriptional mode, thus providing secondary transcription. The protein is RNA-directed RNA polymerase of Bos taurus (Bovine).